Reading from the N-terminus, the 363-residue chain is NADH-quinone oxidoreductase subunit H (363 aa).

A run of 10 helical transmembrane segments spans residues 29-49, 62-82, 96-116, 127-147, 163-183, 202-222, 239-257, 264-286, 299-319, and 339-359; these read VLKILLIAVPVIVTVAFYVVW, GPMYVGMGIFQAFADVFKLLF, FIIAPLLTLAPAFAAWSVVPF, VGLLYLLAMTSLGVYGIILAG, AAQVVSYEIAMGFALVGVMIA, FFDWFLIPLFPLFIVYWVSGV, IVAGHMVEYSGGAFALFFL, ILVSFLISIFFLGGWLSPIQGWV, TGGWPWLLMKVFFFASAYIWF, and FIPLTIVWIAVTALMVFYGVI.

This sequence belongs to the complex I subunit 1 family. In terms of assembly, NDH-1 is composed of 14 different subunits. Subunits NuoA, H, J, K, L, M, N constitute the membrane sector of the complex.

Its subcellular location is the cell inner membrane. The catalysed reaction is a quinone + NADH + 5 H(+)(in) = a quinol + NAD(+) + 4 H(+)(out). NDH-1 shuttles electrons from NADH, via FMN and iron-sulfur (Fe-S) centers, to quinones in the respiratory chain. The immediate electron acceptor for the enzyme in this species is believed to be ubiquinone. Couples the redox reaction to proton translocation (for every two electrons transferred, four hydrogen ions are translocated across the cytoplasmic membrane), and thus conserves the redox energy in a proton gradient. This subunit may bind ubiquinone. The sequence is that of NADH-quinone oxidoreductase subunit H from Xanthomonas campestris pv. campestris (strain B100).